A 24-amino-acid chain; its full sequence is Humanin-like 11 (24 aa).

This sequence belongs to the humanin family.

It is found in the secreted. The protein localises to the cytoplasm. In terms of biological role, plays a role as a neuroprotective and antiapoptotic factor. The protein is Humanin-like 11 of Homo sapiens (Human).